The chain runs to 682 residues: Acetyl-coenzyme A synthetase 2-like, mitochondrial (682 aa).

The transit peptide at 1–38 (MAARSLGSGVGRLLRGLQGRSGQSGWSLSVSRSTATRL) directs the protein to the mitochondrion. Residues 217 to 220 (RGGR) and Thr-334 each bind CoA. Lys-389 is modified (N6-acetyllysine). ATP-binding positions include 410–412 (GEP), 434–439 (DTWWQT), Asp-526, and Arg-541. Ser-549 is a binding site for CoA. Arg-552 serves as a coordination point for ATP. Residue Lys-635 is modified to N6-acetyllysine.

It belongs to the ATP-dependent AMP-binding enzyme family. Interacts with SIRT3. Post-translationally, reversibly acetylated at Lys-635. The acetyl-CoA synthase activity is inhibited by acetylation and activated by deacetylation mediated by the deacetylase SIRT3. Highly expressed in heart, testis, kidney, skeletal muscle, lung and spleen. Detected at low levels in brain.

The protein resides in the mitochondrion matrix. It catalyses the reaction acetate + ATP + CoA = acetyl-CoA + AMP + diphosphate. It carries out the reaction propanoate + ATP + CoA = propanoyl-CoA + AMP + diphosphate. Its activity is regulated as follows. Inhibited by acetylation at Lys-635 and activated by deacetylation mediated by the deacetylase SIRT3. Functionally, catalyzes the synthesis of acetyl-CoA from short-chain fatty acids. Acetate is the preferred substrate. Can also utilize propionate with a much lower affinity. Provides acetyl-CoA that is utilized mainly for oxidation under ketogenic conditions. Involved in thermogenesis under ketogenic conditions, using acetate as a vital fuel when carbohydrate availability is insufficient. This is Acetyl-coenzyme A synthetase 2-like, mitochondrial (Acss1) from Mus musculus (Mouse).